Here is a 444-residue protein sequence, read N- to C-terminus: 23S rRNA (uracil(1939)-C(5))-methyltransferase RlmD (444 aa).

One can recognise a TRAM domain in the interval 5–64; sequence KPKLNLTSQTARIVNLSHDGRGIARVNGKATFIQGALPGEVVEFQYTRIKKDFDEGKLLS. [4Fe-4S] cluster-binding residues include Cys77, Cys83, Cys86, and Cys166. S-adenosyl-L-methionine is bound by residues Gln276, Phe305, Asn310, Glu326, Asn353, and Asp374. Cys400 serves as the catalytic Nucleophile.

It belongs to the class I-like SAM-binding methyltransferase superfamily. RNA M5U methyltransferase family. RlmD subfamily.

The enzyme catalyses uridine(1939) in 23S rRNA + S-adenosyl-L-methionine = 5-methyluridine(1939) in 23S rRNA + S-adenosyl-L-homocysteine + H(+). Functionally, catalyzes the formation of 5-methyl-uridine at position 1939 (m5U1939) in 23S rRNA. The sequence is that of 23S rRNA (uracil(1939)-C(5))-methyltransferase RlmD from Legionella pneumophila (strain Corby).